We begin with the raw amino-acid sequence, 89 residues long: Small ribosomal subunit protein uS15 (89 aa).

It belongs to the universal ribosomal protein uS15 family. In terms of assembly, part of the 30S ribosomal subunit. Forms a bridge to the 50S subunit in the 70S ribosome, contacting the 23S rRNA.

In terms of biological role, one of the primary rRNA binding proteins, it binds directly to 16S rRNA where it helps nucleate assembly of the platform of the 30S subunit by binding and bridging several RNA helices of the 16S rRNA. Its function is as follows. Forms an intersubunit bridge (bridge B4) with the 23S rRNA of the 50S subunit in the ribosome. The polypeptide is Small ribosomal subunit protein uS15 (Chelativorans sp. (strain BNC1)).